We begin with the raw amino-acid sequence, 356 residues long: Fructose-1,6-bisphosphatase class 1 1 (356 aa).

Mg(2+) contacts are provided by Glu-106, Asp-129, Leu-131, and Asp-132. Substrate-binding positions include 132–135, Asn-225, Tyr-258, and Lys-288; that span reads DGSS. A Mg(2+)-binding site is contributed by Glu-294.

The protein belongs to the FBPase class 1 family. Homotetramer. Mg(2+) is required as a cofactor.

The protein resides in the cytoplasm. It carries out the reaction beta-D-fructose 1,6-bisphosphate + H2O = beta-D-fructose 6-phosphate + phosphate. It participates in carbohydrate biosynthesis; gluconeogenesis. The protein is Fructose-1,6-bisphosphatase class 1 1 of Salinibacter ruber (strain DSM 13855 / M31).